A 92-amino-acid chain; its full sequence is Putative pterin-4-alpha-carbinolamine dehydratase (92 aa).

It belongs to the pterin-4-alpha-carbinolamine dehydratase family.

It catalyses the reaction (4aS,6R)-4a-hydroxy-L-erythro-5,6,7,8-tetrahydrobiopterin = (6R)-L-erythro-6,7-dihydrobiopterin + H2O. This Haloarcula marismortui (strain ATCC 43049 / DSM 3752 / JCM 8966 / VKM B-1809) (Halobacterium marismortui) protein is Putative pterin-4-alpha-carbinolamine dehydratase.